The following is a 190-amino-acid chain: MQESFENSVKNMLTIIGEDPNREGLIKTPERVYKAFKFLTSGYEQDPKEVLGDALFTSSNNEMVLMRNIEFYSLCEHHLLPIIGRVHVAYIPNGKVVGLSKIPRMVNIYARRLQIQEQMTEQIAKALEDVIAPKGVGVVVEARHMCVEMRGVEKINSTTTTSALRGCFIKNADTRREFFSLINSPRETHF.

Zn(2+)-binding residues include Cys75, His78, and Cys146.

It belongs to the GTP cyclohydrolase I family. Homomer.

It carries out the reaction GTP + H2O = 7,8-dihydroneopterin 3'-triphosphate + formate + H(+). It participates in cofactor biosynthesis; 7,8-dihydroneopterin triphosphate biosynthesis; 7,8-dihydroneopterin triphosphate from GTP: step 1/1. This is GTP cyclohydrolase 1 from Campylobacter concisus (strain 13826).